The following is a 706-amino-acid chain: Polyribonucleotide nucleotidyltransferase (706 aa).

Residues Asp486 and Asp492 each contribute to the Mg(2+) site. The region spanning 553-612 is the KH domain; it reads PRIYTMKINPEKIKDVIGKGGSVIRALTDETGTTIEIEDDGTIKIAATDGDKAKHAIRRI. Positions 622–690 constitute an S1 motif domain; it reads NRIYAGKVTR…RQGRIRLSMK (69 aa).

This sequence belongs to the polyribonucleotide nucleotidyltransferase family. As to quaternary structure, component of the RNA degradosome, which is a multiprotein complex involved in RNA processing and mRNA degradation. The cofactor is Mg(2+).

Its subcellular location is the cytoplasm. The catalysed reaction is RNA(n+1) + phosphate = RNA(n) + a ribonucleoside 5'-diphosphate. In terms of biological role, involved in mRNA degradation. Catalyzes the phosphorolysis of single-stranded polyribonucleotides processively in the 3'- to 5'-direction. This chain is Polyribonucleotide nucleotidyltransferase, found in Yersinia enterocolitica serotype O:8 / biotype 1B (strain NCTC 13174 / 8081).